The following is a 375-amino-acid chain: Putative serine protease 47 (375 aa).

The signal sequence occupies residues 1 to 23 (MGYCQGVSQVAVVLLMFPKEKEA). The segment at 41-60 (DGQLPMGPHSRASQVAPETT) is disordered. Residues 51–60 (RASQVAPETT) are compositionally biased toward polar residues. Residues 81–323 (IYGGRDAAAG…FINWIDEIMR (243 aa)) enclose the Peptidase S1 domain. An intrachain disulfide couples Cys106 to Cys122. Residues His121 and Asp172 each act as charge relay system in the active site. Asn183 and Asn203 each carry an N-linked (GlcNAc...) asparagine glycan. Cys206 and Cys281 are joined by a disulfide. Catalysis depends on Ser275, which acts as the Charge relay system.

Belongs to the peptidase S1 family.

It is found in the secreted. The sequence is that of Putative serine protease 47 (PRSS47P) from Homo sapiens (Human).